Here is a 472-residue protein sequence, read N- to C-terminus: Siroheme synthase (472 aa).

The tract at residues 1-207 is precorrin-2 dehydrogenase /sirohydrochlorin ferrochelatase; that stretch reads MNFLPIFLDI…GKDQAAKAWL (207 aa). NAD(+) is bound by residues 22–23 and 43–44; these read EV and PR. Serine 132 bears the Phosphoserine mark. A uroporphyrinogen-III C-methyltransferase region spans residues 221 to 472; the sequence is GEVYLVGAGP…QPEGNLPGAE (252 aa). Proline 230 is a binding site for S-adenosyl-L-methionine. Catalysis depends on aspartate 253, which acts as the Proton acceptor. The active-site Proton donor is the lysine 275. S-adenosyl-L-methionine contacts are provided by residues 306-308, isoleucine 311, 336-337, methionine 388, and glycine 417; these read GGD and TA.

This sequence in the N-terminal section; belongs to the precorrin-2 dehydrogenase / sirohydrochlorin ferrochelatase family. In the C-terminal section; belongs to the precorrin methyltransferase family.

The catalysed reaction is uroporphyrinogen III + 2 S-adenosyl-L-methionine = precorrin-2 + 2 S-adenosyl-L-homocysteine + H(+). It catalyses the reaction precorrin-2 + NAD(+) = sirohydrochlorin + NADH + 2 H(+). The enzyme catalyses siroheme + 2 H(+) = sirohydrochlorin + Fe(2+). It participates in cofactor biosynthesis; adenosylcobalamin biosynthesis; precorrin-2 from uroporphyrinogen III: step 1/1. It functions in the pathway cofactor biosynthesis; adenosylcobalamin biosynthesis; sirohydrochlorin from precorrin-2: step 1/1. The protein operates within porphyrin-containing compound metabolism; siroheme biosynthesis; precorrin-2 from uroporphyrinogen III: step 1/1. Its pathway is porphyrin-containing compound metabolism; siroheme biosynthesis; siroheme from sirohydrochlorin: step 1/1. It participates in porphyrin-containing compound metabolism; siroheme biosynthesis; sirohydrochlorin from precorrin-2: step 1/1. Multifunctional enzyme that catalyzes the SAM-dependent methylations of uroporphyrinogen III at position C-2 and C-7 to form precorrin-2 via precorrin-1. Then it catalyzes the NAD-dependent ring dehydrogenation of precorrin-2 to yield sirohydrochlorin. Finally, it catalyzes the ferrochelation of sirohydrochlorin to yield siroheme. The polypeptide is Siroheme synthase (Nitrosospira multiformis (strain ATCC 25196 / NCIMB 11849 / C 71)).